Consider the following 621-residue polypeptide: Chaperone protein HtpG (621 aa).

The interval 1 to 328 (MTQEKKKFDA…SEDLPLNISR (328 aa)) is a; substrate-binding. A b region spans residues 329–544 (ESLQHNNVLE…DTAMDIRMER (216 aa)). The tract at residues 545 to 621 (FLIEQKQIAS…LNDILQKAIL (77 aa)) is c.

Belongs to the heat shock protein 90 family. As to quaternary structure, homodimer.

It is found in the cytoplasm. Functionally, molecular chaperone. Has ATPase activity. In Rickettsia typhi (strain ATCC VR-144 / Wilmington), this protein is Chaperone protein HtpG.